The chain runs to 90 residues: MSRTIFCTVLQRDAEGQDFQLYPGDLGKRIYNEISKEAWAQWQTKQTMLINEKKLSMMNVDDRKLLEQEMIKFLFEGKDVHIEGYTPPSH.

The protein belongs to the Fe(2+)-trafficking protein family. As to quaternary structure, monomer.

In terms of biological role, could be a mediator in iron transactions between iron acquisition and iron-requiring processes, such as synthesis and/or repair of Fe-S clusters in biosynthetic enzymes. The protein is Probable Fe(2+)-trafficking protein of Pectobacterium atrosepticum (strain SCRI 1043 / ATCC BAA-672) (Erwinia carotovora subsp. atroseptica).